Here is a 657-residue protein sequence, read N- to C-terminus: MKLGFEIQRALQGLLNKAAVDGGAYGHLIQHFTRHRLPLHVLQLHARIVVFSIKPDNFLASKLISFYTRQDRFRQALHVFDEITVRNAFSYNALLIAYTSREMYFDAFSLFLSWIGSSCYSSDAARPDSISISCVLKALSGCDDFWLGSLARQVHGFVIRGGFDSDVFVGNGMITYYTKCDNIESARKVFDEMSERDVVSWNSMISGYSQSGSFEDCKKMYKAMLACSDFKPNGVTVISVFQACGQSSDLIFGLEVHKKMIENHIQMDLSLCNAVIGFYAKCGSLDYARALFDEMSEKDSVTYGAIISGYMAHGLVKEAMALFSEMESIGLSTWNAMISGLMQNNHHEEVINSFREMIRCGSRPNTVTLSSLLPSLTYSSNLKGGKEIHAFAIRNGADNNIYVTTSIIDNYAKLGFLLGAQRVFDNCKDRSLIAWTAIITAYAVHGDSDSACSLFDQMQCLGTKPDDVTLTAVLSAFAHSGDSDMAQHIFDSMLTKYDIEPGVEHYACMVSVLSRAGKLSDAMEFISKMPIDPIAKVWGALLNGASVLGDLEIARFACDRLFEMEPENTGNYTIMANLYTQAGRWEEAEMVRNKMKRIGLKKIPGTSWIETEKGLRSFIAKDSSCERSKEMYEIIEGLVESMSDKEYIRKQELDEAY.

15 PPR repeats span residues 21–55 (DGGA…SIKP), 56–86 (DNFL…ITVR), 87–121 (NAFS…SCYS), 128–165 (DSIS…GFDS), 166–196 (DVFV…MSER), 197–232 (DVVS…DFKP), 233–267 (NGVT…HIQM), 268–298 (DLSL…MSEK), 299–333 (DSVT…GLST), 334–364 (WNAM…GSRP), 365–399 (NTVT…GADN), 400–430 (NIYV…CKDR), 431–465 (SLIA…GTKP), 466–501 (DDVT…DIEP), and 502–536 (GVEH…PIAK). A type E motif region spans residues 537 to 612 (VWGALLNGAS…IPGTSWIETE (76 aa)). The type E(+) motif stretch occupies residues 613 to 643 (KGLRSFIAKDSSCERSKEMYEIIEGLVESMS).

It belongs to the PPR family. PCMP-E subfamily.

In Arabidopsis thaliana (Mouse-ear cress), this protein is Pentatricopeptide repeat-containing protein At2g37310 (PCMP-E49).